The following is a 32-amino-acid chain: Ovostatin (32 aa).

Positions 27 to 30 (CGEQ) form a cross-link, isoglutamyl cysteine thioester (Cys-Gln).

Belongs to the protease inhibitor I39 (alpha-2-macroglobulin) family. Homotetramer, which consists of two pairs of disulfide-linked chains.

The protein resides in the secreted. Is able to inhibit all four classes of proteinases by a unique 'trapping' mechanism. This protein has a peptide stretch, called the 'bait region' which contains specific cleavage sites for different proteinases. When a proteinase cleaves the bait region, a conformational change is induced in the protein which traps the proteinase. The entrapped enzyme remains active against low molecular weight substrates (activity against high molecular weight substrates is greatly reduced). Following cleavage in the bait region a thioester bond is hydrolyzed and mediates the covalent binding of the protein to the proteinase. This is Ovostatin from Anas platyrhynchos (Mallard).